Consider the following 332-residue polypeptide: L-lactate dehydrogenase A chain (332 aa).

NAD(+)-binding positions include 29–57 (GMVG…MEEK) and Arg99. Residues Arg106, Asn138, and Arg169 each contribute to the substrate site. Position 138 (Asn138) interacts with NAD(+). The active-site Proton acceptor is His193. Residue Thr248 participates in substrate binding.

It belongs to the LDH/MDH superfamily. LDH family. As to quaternary structure, homotetramer.

The protein localises to the cytoplasm. The enzyme catalyses (S)-lactate + NAD(+) = pyruvate + NADH + H(+). Its pathway is fermentation; pyruvate fermentation to lactate; (S)-lactate from pyruvate: step 1/1. In terms of biological role, interconverts simultaneously and stereospecifically pyruvate and lactate with concomitant interconversion of NADH and NAD(+). In Lycodichthys dearborni (Antarctic eelpout), this protein is L-lactate dehydrogenase A chain (ldha).